Consider the following 362-residue polypeptide: Sulfate/thiosulfate import ATP-binding protein CysA (362 aa).

Residues 3–237 (IEINNISKYF…PASRFVMEFL (235 aa)) form the ABC transporter domain. 35 to 42 (GPSGSGKT) contributes to the ATP binding site.

The protein belongs to the ABC transporter superfamily. Sulfate/tungstate importer (TC 3.A.1.6) family. As to quaternary structure, the complex is composed of two ATP-binding proteins (CysA), two transmembrane proteins (CysT and CysW) and a solute-binding protein (CysP).

It localises to the cell inner membrane. The enzyme catalyses sulfate(out) + ATP + H2O = sulfate(in) + ADP + phosphate + H(+). It carries out the reaction thiosulfate(out) + ATP + H2O = thiosulfate(in) + ADP + phosphate + H(+). Functionally, part of the ABC transporter complex CysAWTP involved in sulfate/thiosulfate import. Responsible for energy coupling to the transport system. The sequence is that of Sulfate/thiosulfate import ATP-binding protein CysA from Photorhabdus laumondii subsp. laumondii (strain DSM 15139 / CIP 105565 / TT01) (Photorhabdus luminescens subsp. laumondii).